Consider the following 518-residue polypeptide: Putative cysteine ligase BshC (518 aa).

Residues 404–474 (AAASAERLAA…RARQLTRLKR (71 aa)) adopt a coiled-coil conformation.

Belongs to the BshC family.

The sequence is that of Putative cysteine ligase BshC from Deinococcus geothermalis (strain DSM 11300 / CIP 105573 / AG-3a).